The following is a 156-amino-acid chain: MDINASLIVQMLVFVVFIGLTMKFIWPPLTKALEARRKNIADGLAAAEEGRKELELAEIKSKEQLTEAKTQAAHIIEQANQRANHIVEEAKNKAREEGAHLIQLAKNEIEQEYNAAKTELLKQISTIAVAGAQKILQREVDKASNDRLVDELVSEI.

Residues L7–P27 form a helical membrane-spanning segment.

It belongs to the ATPase B chain family. In terms of assembly, F-type ATPases have 2 components, F(1) - the catalytic core - and F(0) - the membrane proton channel. F(1) has five subunits: alpha(3), beta(3), gamma(1), delta(1), epsilon(1). F(0) has three main subunits: a(1), b(2) and c(10-14). The alpha and beta chains form an alternating ring which encloses part of the gamma chain. F(1) is attached to F(0) by a central stalk formed by the gamma and epsilon chains, while a peripheral stalk is formed by the delta and b chains.

Its subcellular location is the cell inner membrane. Functionally, f(1)F(0) ATP synthase produces ATP from ADP in the presence of a proton or sodium gradient. F-type ATPases consist of two structural domains, F(1) containing the extramembraneous catalytic core and F(0) containing the membrane proton channel, linked together by a central stalk and a peripheral stalk. During catalysis, ATP synthesis in the catalytic domain of F(1) is coupled via a rotary mechanism of the central stalk subunits to proton translocation. In terms of biological role, component of the F(0) channel, it forms part of the peripheral stalk, linking F(1) to F(0). This chain is ATP synthase subunit b, found in Coxiella burnetii (strain CbuK_Q154) (Coxiella burnetii (strain Q154)).